Here is a 205-residue protein sequence, read N- to C-terminus: Glutathione peroxidase 1 (205 aa).

A Phosphoserine modification is found at Ser37. The active site involves Sec52. Residue Sec52 is a non-standard amino acid, selenocysteine. N6-acetyllysine; alternate is present on residues Lys91 and Lys117. Lys91 and Lys117 each carry N6-succinyllysine; alternate. Lys117 carries an N-linked (Glc) (glycation) lysine; in vitro glycan. An N6-acetyllysine modification is found at Lys124. Lys151 bears the N6-acetyllysine; alternate mark. Lys151 carries the post-translational modification N6-succinyllysine; alternate. Phosphoserine occurs at positions 200 and 204.

The protein belongs to the glutathione peroxidase family. In terms of assembly, homotetramer. Interacts with MIEN1. Post-translationally, during periods of oxidative stress, Sec-52 may react with a superoxide radical, irreversibly lose hydroselenide and be converted to dehydroalanine.

The protein localises to the cytoplasm. It localises to the mitochondrion. The catalysed reaction is 2 glutathione + H2O2 = glutathione disulfide + 2 H2O. It carries out the reaction a hydroperoxy polyunsaturated fatty acid + 2 glutathione = a hydroxy polyunsaturated fatty acid + glutathione disulfide + H2O. The enzyme catalyses tert-butyl hydroperoxide + 2 glutathione = tert-butanol + glutathione disulfide + H2O. It catalyses the reaction cumene hydroperoxide + 2 glutathione = 2-phenylpropan-2-ol + glutathione disulfide + H2O. The catalysed reaction is (13S)-hydroperoxy-(9Z,11E)-octadecadienoate + 2 glutathione = (13S)-hydroxy-(9Z,11E)-octadecadienoate + glutathione disulfide + H2O. It carries out the reaction (9S)-hydroperoxy-(10E,12Z)-octadecadienoate + 2 glutathione = (9S)-hydroxy-(10E,12Z)-octadecadienoate + glutathione disulfide + H2O. The enzyme catalyses (5S)-hydroperoxy-(6E,8Z,11Z,14Z)-eicosatetraenoate + 2 glutathione = (5S)-hydroxy-(6E,8Z,11Z,14Z)-eicosatetraenoate + glutathione disulfide + H2O. It catalyses the reaction (12S)-hydroperoxy-(5Z,8Z,10E,14Z)-eicosatetraenoate + 2 glutathione = (12S)-hydroxy-(5Z,8Z,10E,14Z)-eicosatetraenoate + glutathione disulfide + H2O. The catalysed reaction is (12R)-hydroperoxy-(5Z,8Z,10E,14Z)-eicosatetraenoate + 2 glutathione = (12R)-hydroxy-(5Z,8Z,10E,14Z)-eicosatetraenoate + glutathione disulfide + H2O. It carries out the reaction (15S)-hydroperoxy-(5Z,8Z,11Z,13E)-eicosatetraenoate + 2 glutathione = (15S)-hydroxy-(5Z,8Z,11Z,13E)-eicosatetraenoate + glutathione disulfide + H2O. The enzyme catalyses (5S)-hydroperoxy-(6E,8Z,11Z,14Z,17Z)-eicosapentaenoate + 2 glutathione = (5S)-hydroxy-(6E,8Z,11Z,14Z,17Z)-eicosapentaenoate + glutathione disulfide + H2O. It catalyses the reaction (15S)-hydroperoxy-(5Z,8Z,11Z,13E,17Z)-eicosapentaenoate + 2 glutathione = (15S)-hydroxy-(5Z,8Z,11Z,13E,17Z)-eicosapentaenoate + glutathione disulfide + H2O. The catalysed reaction is (15S)-hydroperoxy-(11Z,13E)-eicosadienoate + 2 glutathione = (15S)-hydroxy-(11Z,13E)-eicosadienoate + glutathione disulfide + H2O. It carries out the reaction (17S)-hydroperoxy-(4Z,7Z,10Z,13Z,15E,19Z)-docosahexaenoate + 2 glutathione = (17S)-hydroxy-(4Z,7Z,10Z,13Z,15E,19Z)-docosahexaenoate + glutathione disulfide + H2O. In terms of biological role, catalyzes the reduction of hydroperoxides in a glutathione-dependent manner thus regulating cellular redox homeostasis. Can reduce small soluble hydroperoxides such as H2O2, cumene hydroperoxide and tert-butyl hydroperoxide, as well as several fatty acid-derived hydroperoxides. In platelets catalyzes the reduction of 12-hydroperoxyeicosatetraenoic acid, the primary product of the arachidonate 12-lipoxygenase pathway. The chain is Glutathione peroxidase 1 (GPX1) from Bos taurus (Bovine).